Reading from the N-terminus, the 66-residue chain is Defensin-like peptide 2/4 (66 aa).

A signal peptide spans 1-22 (MRLAYLLLLLVAVLFQAGGGSA). Positions 23-24 (KP) are excised as a propeptide. The residue at position 26 (Met26) is a D-methionine; in form DLP-2. 3 cysteine pairs are disulfide-bonded: Cys33–Cys63, Cys40–Cys56, and Cys48–Cys64.

Stereoinversion of L-Met-26 (in DLP-4) to D-Met-26 (in DLP-2). As to expression, produced by the crural gland and detected in venom from the spur located on each male hind leg. Is also widely expressed in both male and female tissues, including brain, intestine, kidney, lung, spleen and testis.

It localises to the secreted. Does not show antimicrobial, myotoxic, hemolytic and cell-promoting activities. The chain is Defensin-like peptide 2/4 from Ornithorhynchus anatinus (Duckbill platypus).